The following is a 284-amino-acid chain: 3-methyl-2-oxobutanoate hydroxymethyltransferase 2 (284 aa).

Positions 49 and 88 each coordinate Mg(2+). 3-methyl-2-oxobutanoate-binding positions include 49 to 50 (DS), aspartate 88, and lysine 118. Glutamate 120 serves as a coordination point for Mg(2+). Glutamate 187 functions as the Proton acceptor in the catalytic mechanism.

The protein belongs to the PanB family. As to quaternary structure, homodecamer; pentamer of dimers. Mg(2+) serves as cofactor.

Its subcellular location is the cytoplasm. It catalyses the reaction 3-methyl-2-oxobutanoate + (6R)-5,10-methylene-5,6,7,8-tetrahydrofolate + H2O = 2-dehydropantoate + (6S)-5,6,7,8-tetrahydrofolate. Its pathway is cofactor biosynthesis; (R)-pantothenate biosynthesis; (R)-pantoate from 3-methyl-2-oxobutanoate: step 1/2. Catalyzes the reversible reaction in which hydroxymethyl group from 5,10-methylenetetrahydrofolate is transferred onto alpha-ketoisovalerate to form ketopantoate. The protein is 3-methyl-2-oxobutanoate hydroxymethyltransferase 2 of Burkholderia cenocepacia (strain HI2424).